The sequence spans 132 residues: Probable prefoldin subunit 4 (132 aa).

This sequence belongs to the prefoldin subunit beta family. In terms of assembly, heterohexamer of two PFD-alpha type and four PFD-beta type subunits.

Functionally, binds specifically to cytosolic chaperonin (c-CPN) and transfers target proteins to it. Binds to nascent polypeptide chain and promotes folding in an environment in which there are many competing pathways for nonnative proteins. This chain is Probable prefoldin subunit 4 (pfdn4), found in Dictyostelium discoideum (Social amoeba).